We begin with the raw amino-acid sequence, 378 residues long: Phospho-N-acetylmuramoyl-pentapeptide-transferase (378 aa).

Transmembrane regions (helical) follow at residues 26-46, 57-77, 103-123, 127-147, 171-191, 195-215, 225-245, 247-267, 275-295, 302-322, and 356-376; these read LFRL…TGAN, LPWL…VPLL, MGGI…TGFA, LSPT…IGWW, GIGA…ATVV, WGWV…VPMA, GLDG…GIIL, PYPD…GFLW, VFMG…IGLA, LLIV…QVLY, and IVRT…LLQW.

This sequence belongs to the glycosyltransferase 4 family. MraY subfamily. It depends on Mg(2+) as a cofactor.

The protein resides in the cell inner membrane. The catalysed reaction is UDP-N-acetyl-alpha-D-muramoyl-L-alanyl-gamma-D-glutamyl-meso-2,6-diaminopimeloyl-D-alanyl-D-alanine + di-trans,octa-cis-undecaprenyl phosphate = di-trans,octa-cis-undecaprenyl diphospho-N-acetyl-alpha-D-muramoyl-L-alanyl-D-glutamyl-meso-2,6-diaminopimeloyl-D-alanyl-D-alanine + UMP. It participates in cell wall biogenesis; peptidoglycan biosynthesis. Functionally, catalyzes the initial step of the lipid cycle reactions in the biosynthesis of the cell wall peptidoglycan: transfers peptidoglycan precursor phospho-MurNAc-pentapeptide from UDP-MurNAc-pentapeptide onto the lipid carrier undecaprenyl phosphate, yielding undecaprenyl-pyrophosphoryl-MurNAc-pentapeptide, known as lipid I. This is Phospho-N-acetylmuramoyl-pentapeptide-transferase from Thermosynechococcus vestitus (strain NIES-2133 / IAM M-273 / BP-1).